A 410-amino-acid polypeptide reads, in one-letter code: MAEAGPQAPPPPGTPSRHEKSLGLLTTKFVSLLQEAKDGVLDLKLAADTLAVRQKRRIYDITNVLEGIGLIEKKSKNSIQWKGVGPGCNTREIADKLIELKAEIEELQQREQELDQHKVWVQQSIRNVTEDVQNSCLAYVTHEDICRCFAGDTLLAIRAPSGTSLEVPIPEGLNGQKKYQIHLKSMSGPIEVLLVNKEAWSSPPVAVPVPPPDDLLQSPPAVSTPPPLPKPALAQPQESSPPSSPQLTTPTPVLGSTQVSEVACQTSEIAVSGSPGTENKDSGEVSSLPLGLTALDTRPLQSSALLDSSSSSSSSSSSSSSSSSGPNPSTSFEPIKADPTGVLDLPKELSEIFDPTRECMSSELLEELMSSEVFAPLLRLSPPPGDHDYIYNLDESEGVCDLFDVPVLKL.

The tract at residues 1 to 20 is disordered; it reads MAEAGPQAPPPPGTPSRHEK. Alanine 2 is modified (N-acetylalanine). The DNA-binding element occupies 16 to 85; it reads SRHEKSLGLL…KNSIQWKGVG (70 aa). The interval 43 to 65 is leucine-zipper; it reads LKLAADTLAVRQKRRIYDITNVL. The short motif at 48 to 85 is the DEF box element; that stretch reads DTLAVRQKRRIYDITNVLEGIGLIEKKSKNSIQWKGVG. Positions 86–181 are dimerization; that stretch reads PGCNTREIAD…GLNGQKKYQI (96 aa). 2 disordered regions span residues 203–258 and 303–341; these read PPVA…GSTQ and SALL…DPTG. 2 stretches are compositionally biased toward low complexity: residues 231–252 and 308–324; these read PALA…TPTP and SSSS…SSSS. The interval 334–410 is transactivation; that stretch reads PIKADPTGVL…DLFDVPVLKL (77 aa). Serine 381 is modified (phosphoserine). The short motif at 386–389 is the HCFC1-binding-motif (HBM) element; that stretch reads DHDY. Positions 387–404 are interaction with RBL1 and RBL2; the sequence is HDYIYNLDESEGVCDLFD.

The protein belongs to the E2F/DP family. As to quaternary structure, component of the DRTF1/E2F transcription factor complex. Binds cooperatively with TFDP1/Dp-1 to E2F sites. The E2F4/TFDP1 dimer interacts preferentially with pocket protein RBL1, which inhibits the E2F transactivation domain. Lower affinity interaction has been found with retinoblastoma protein RB1. Interacts with TRRAP, which probably mediates its interaction with histone acetyltransferase complexes, leading to transcription activation. Interacts with HCFC1. Component of the DREAM complex (also named LINC complex) at least composed of E2F4, E2F5, LIN9, LIN37, LIN52, LIN54, MYBL1, MYBL2, RBL1, RBL2, RBBP4, TFDP1 and TFDP2. The complex exists in quiescent cells where it represses cell cycle-dependent genes. It dissociates in S phase when LIN9, LIN37, LIN52 and LIN54 form a subcomplex that binds to MYBL2. Interacts with PML. Interacts with CEBPA (when phosphorylated). Differentially phosphorylated in vivo.

It localises to the nucleus. Transcription activator that binds DNA cooperatively with DP proteins through the E2 recognition site, 5'-TTTC[CG]CGC-3' found in the promoter region of a number of genes whose products are involved in cell cycle regulation or in DNA replication. The DRTF1/E2F complex functions in the control of cell-cycle progression from G1 to S phase. E2F4 binds with high affinity to RBL1 and RBL2. In some instances can also bind RB1. Specifically required for multiciliate cell differentiation: together with MCIDAS and E2F5, binds and activate genes required for centriole biogenesis. In Mus musculus (Mouse), this protein is Transcription factor E2F4 (E2f4).